Consider the following 1091-residue polypeptide: ATP-dependent helicase/deoxyribonuclease subunit B (1091 aa).

It belongs to the helicase family. AddB/RexB type 2 subfamily. Heterodimer of AddA and RexB. Mg(2+) is required as a cofactor.

The heterodimer acts as both an ATP-dependent DNA helicase and an ATP-dependent, dual-direction single-stranded exonuclease. Recognizes the chi site generating a DNA molecule suitable for the initiation of homologous recombination. This subunit has 5' -&gt; 3' nuclease activity but not helicase activity. In Streptococcus pneumoniae (strain ATCC 700669 / Spain 23F-1), this protein is ATP-dependent helicase/deoxyribonuclease subunit B.